Consider the following 113-residue polypeptide: Large ribosomal subunit protein uL22 (113 aa).

The protein belongs to the universal ribosomal protein uL22 family. As to quaternary structure, part of the 50S ribosomal subunit.

Its function is as follows. This protein binds specifically to 23S rRNA; its binding is stimulated by other ribosomal proteins, e.g. L4, L17, and L20. It is important during the early stages of 50S assembly. It makes multiple contacts with different domains of the 23S rRNA in the assembled 50S subunit and ribosome. Functionally, the globular domain of the protein is located near the polypeptide exit tunnel on the outside of the subunit, while an extended beta-hairpin is found that lines the wall of the exit tunnel in the center of the 70S ribosome. The sequence is that of Large ribosomal subunit protein uL22 from Natranaerobius thermophilus (strain ATCC BAA-1301 / DSM 18059 / JW/NM-WN-LF).